Here is a 28-residue protein sequence, read N- to C-terminus: Conotoxin Cl9b (28 aa).

4-hydroxyproline occurs at positions 17 and 28.

In terms of processing, contains 3 disulfide bonds. Expressed by the venom duct.

It is found in the secreted. The chain is Conotoxin Cl9b from Californiconus californicus (California cone).